The chain runs to 657 residues: Glycogen debranching enzyme (657 aa).

D336 serves as the catalytic Nucleophile. The Proton donor role is filled by E371. The disordered stretch occupies residues 460-479; sequence ANGEENRDGTNNNYSNNHGK.

Belongs to the glycosyl hydrolase 13 family.

The catalysed reaction is Hydrolysis of (1-&gt;6)-alpha-D-glucosidic linkages to branches with degrees of polymerization of three or four glucose residues in limit dextrin.. Its pathway is glycan degradation; glycogen degradation. Removes maltotriose and maltotetraose chains that are attached by 1,6-alpha-linkage to the limit dextrin main chain, generating a debranched limit dextrin. This chain is Glycogen debranching enzyme, found in Escherichia coli O127:H6 (strain E2348/69 / EPEC).